A 216-amino-acid polypeptide reads, in one-letter code: UPF0548 protein (216 aa).

Belongs to the UPF0548 family.

In Dictyostelium discoideum (Social amoeba), this protein is UPF0548 protein.